The primary structure comprises 152 residues: D-aminoacyl-tRNA deacylase (152 aa).

The short motif at 137–138 (GP) is the Gly-cisPro motif, important for rejection of L-amino acids element.

This sequence belongs to the DTD family. As to quaternary structure, homodimer.

It localises to the cytoplasm. The enzyme catalyses glycyl-tRNA(Ala) + H2O = tRNA(Ala) + glycine + H(+). It carries out the reaction a D-aminoacyl-tRNA + H2O = a tRNA + a D-alpha-amino acid + H(+). In terms of biological role, an aminoacyl-tRNA editing enzyme that deacylates mischarged D-aminoacyl-tRNAs. Also deacylates mischarged glycyl-tRNA(Ala), protecting cells against glycine mischarging by AlaRS. Acts via tRNA-based rather than protein-based catalysis; rejects L-amino acids rather than detecting D-amino acids in the active site. By recycling D-aminoacyl-tRNA to D-amino acids and free tRNA molecules, this enzyme counteracts the toxicity associated with the formation of D-aminoacyl-tRNA entities in vivo and helps enforce protein L-homochirality. The protein is D-aminoacyl-tRNA deacylase of Aromatoleum aromaticum (strain DSM 19018 / LMG 30748 / EbN1) (Azoarcus sp. (strain EbN1)).